Here is a 381-residue protein sequence, read N- to C-terminus: Flap endonuclease 1 (381 aa).

An N-domain region spans residues 1 to 105 (MGIKGLNSII…HELDKRTSRR (105 aa)). Aspartate 34 contributes to the Mg(2+) binding site. DNA contacts are provided by arginine 47 and arginine 71. Residues aspartate 87, glutamate 156, glutamate 158, aspartate 177, and aspartate 179 each coordinate Mg(2+). Positions 120-251 (EKMKHERRLV…VTALKLMKEH (132 aa)) are I-domain. DNA is bound at residue glutamate 156. Positions 229 and 231 each coordinate DNA. Aspartate 231 serves as a coordination point for Mg(2+). An interaction with PCNA region spans residues 338–346 (VQGRLDGFF).

This sequence belongs to the XPG/RAD2 endonuclease family. FEN1 subfamily. As to quaternary structure, interacts with PCNA. Three molecules of FEN1 bind to one PCNA trimer with each molecule binding to one PCNA monomer. PCNA stimulates the nuclease activity without altering cleavage specificity. Mg(2+) serves as cofactor. Post-translationally, phosphorylated. Phosphorylation upon DNA damage induces relocalization to the nuclear plasma.

Its subcellular location is the nucleus. It localises to the nucleolus. The protein localises to the nucleoplasm. The protein resides in the mitochondrion. Structure-specific nuclease with 5'-flap endonuclease and 5'-3' exonuclease activities involved in DNA replication and repair. During DNA replication, cleaves the 5'-overhanging flap structure that is generated by displacement synthesis when DNA polymerase encounters the 5'-end of a downstream Okazaki fragment. It enters the flap from the 5'-end and then tracks to cleave the flap base, leaving a nick for ligation. Also involved in the long patch base excision repair (LP-BER) pathway, by cleaving within the apurinic/apyrimidinic (AP) site-terminated flap. Acts as a genome stabilization factor that prevents flaps from equilibrating into structures that lead to duplications and deletions. Also possesses 5'-3' exonuclease activity on nicked or gapped double-stranded DNA, and exhibits RNase H activity. Also involved in replication and repair of rDNA and in repairing mitochondrial DNA. This chain is Flap endonuclease 1, found in Candida glabrata (strain ATCC 2001 / BCRC 20586 / JCM 3761 / NBRC 0622 / NRRL Y-65 / CBS 138) (Yeast).